An 857-amino-acid chain; its full sequence is Glucans biosynthesis glucosyltransferase H (857 aa).

6 consecutive transmembrane segments (helical) span residues 142–162 (ILLTLMIGQTLVAGWYMKGIL), 196–216 (ILILFGILFCWVSAGFWTALM), 515–535 (VFLTGVMSYLSAPLWFFFLVL), 572–592 (LFSTTIVLLFLPKLLSIILIW), 606–626 (TLSMLMEMLFSMLLAPVRMIF), and 682–702 (FLWWLAPIVGSLVLSIPVSVI).

This sequence belongs to the glycosyltransferase 2 family. OpgH subfamily.

The protein localises to the cell inner membrane. The protein operates within glycan metabolism; osmoregulated periplasmic glucan (OPG) biosynthesis. Functionally, involved in the biosynthesis of osmoregulated periplasmic glucans (OPGs). The polypeptide is Glucans biosynthesis glucosyltransferase H (Pseudomonas putida (strain W619)).